A 444-amino-acid polypeptide reads, in one-letter code: MKSEIIESLKSKLNRRVWESWFGTFDVKEIGPDYVVFQVGNLFIREWLEKKYGSLISKTLRELFGKPMDFRIEHASAKTEEKLDSNEDEPLVKKRPLILTPLNPILTFENFVVGPNNMFAYSTCLEVAKNPGKYNPLFLHGGVGLGKTHLLQAIGHYLFKHEPDMRVIYLTSERFLNELVDSIKKNRVQEFRDKFRNKIDVLLLDDVQFLIGKTGIQTELFHTFNELYNEGKQIVVCSDRDPQQLEKFQDRLVSRFQMGVVTKIEKPDEETCFKIAQKMAQLENAELQEDILKLISKNFSDNLRRLRGALVKLIMYQQISGEKVDLQKAFELLAIQNSYHNKSLPEEKLMNSICEIFGVSQEEILSKSRKKEVALARQIGMYVARNYMGFSLRKVADMFKRSHPTVSHTIQKLEELTNSGNMVIKSQIDRLARCVTGQILDQSV.

Residues 1 to 66 (MKSEIIESLK…SKTLRELFGK (66 aa)) form a domain I, interacts with DnaA modulators region. The segment at 66–100 (KPMDFRIEHASAKTEEKLDSNEDEPLVKKRPLILT) is domain II. The interval 101–317 (PLNPILTFEN…GALVKLIMYQ (217 aa)) is domain III, AAA+ region. The ATP site is built by Gly144, Gly146, Lys147, and Thr148. A domain IV, binds dsDNA region spans residues 318–444 (QISGEKVDLQ…VTGQILDQSV (127 aa)).

Belongs to the DnaA family. In terms of assembly, oligomerizes as a right-handed, spiral filament on DNA at oriC.

The protein resides in the cytoplasm. In terms of biological role, plays an essential role in the initiation and regulation of chromosomal replication. ATP-DnaA binds to the origin of replication (oriC) to initiate formation of the DNA replication initiation complex once per cell cycle. Binds the DnaA box (a 9 base pair repeat at the origin) and separates the double-stranded (ds)DNA. Forms a right-handed helical filament on oriC DNA; dsDNA binds to the exterior of the filament while single-stranded (ss)DNA is stabiized in the filament's interior. The ATP-DnaA-oriC complex binds and stabilizes one strand of the AT-rich DNA unwinding element (DUE), permitting loading of DNA polymerase. After initiation quickly degrades to an ADP-DnaA complex that is not apt for DNA replication. Binds acidic phospholipids. The chain is Chromosomal replication initiator protein DnaA from Pseudothermotoga lettingae (strain ATCC BAA-301 / DSM 14385 / NBRC 107922 / TMO) (Thermotoga lettingae).